The primary structure comprises 512 residues: 2-isopropylmalate synthase (512 aa).

Positions 5 to 268 (LIIFDTTLRD…DIGIDTQQIL (264 aa)) constitute a Pyruvate carboxyltransferase domain. Mn(2+) contacts are provided by Asp14, His202, His204, and Asn239. A regulatory domain region spans residues 394–512 (GFVSLSQHSE…SKADRVAAQG (119 aa)).

It belongs to the alpha-IPM synthase/homocitrate synthase family. LeuA type 1 subfamily. Homodimer. The cofactor is Mn(2+).

It localises to the cytoplasm. The enzyme catalyses 3-methyl-2-oxobutanoate + acetyl-CoA + H2O = (2S)-2-isopropylmalate + CoA + H(+). It functions in the pathway amino-acid biosynthesis; L-leucine biosynthesis; L-leucine from 3-methyl-2-oxobutanoate: step 1/4. Functionally, catalyzes the condensation of the acetyl group of acetyl-CoA with 3-methyl-2-oxobutanoate (2-ketoisovalerate) to form 3-carboxy-3-hydroxy-4-methylpentanoate (2-isopropylmalate). This chain is 2-isopropylmalate synthase, found in Polaromonas naphthalenivorans (strain CJ2).